Reading from the N-terminus, the 425-residue chain is MLDIKFVRAHPEVVLADLEKRQDAEKLLWVDTVLEQDKLFRELTVKNNELRARRNQIAKEINAYKKEGKDPAPLFAEAKALPGLIKDNDDIMEKATEQVRYYLMRLPNILHESVPYGKDDTENVVVKKVGTPRSLDFELKNHGELAAANGWADFERATKTSGAGFYFLKGNLALLDMALQRFALDTIIAKGYTPIIPPYMMNRKSYEEVTDLGDFEKVMYKIEDDDAYLIATAEHPMAAMYQDEIFEEKDLPLKMVGISPCFRREIGAHGLDSRGLFRVHQFTKIEQFIYCMPEKSWEMHEELLANAEEIFTKLGLPYRVVNICTGDIGTVAAKKYDMEAWMPRDNEYREVVSCSNCTAYQSVRLNIRVRDAHDFESKQWLHTLNSTAVATSRALRCILENYQTEDGKVEIPKVLRPYMNGLEYL.

232–234 (TAE) provides a ligand contact to L-serine. ATP contacts are provided by residues 263–265 (RRE) and Val279. Glu286 lines the L-serine pocket. 350–353 (EVVS) is an ATP binding site. Thr387 contacts L-serine.

The protein belongs to the class-II aminoacyl-tRNA synthetase family. Type-1 seryl-tRNA synthetase subfamily. In terms of assembly, homodimer. The tRNA molecule binds across the dimer.

It is found in the cytoplasm. It catalyses the reaction tRNA(Ser) + L-serine + ATP = L-seryl-tRNA(Ser) + AMP + diphosphate + H(+). The catalysed reaction is tRNA(Sec) + L-serine + ATP = L-seryl-tRNA(Sec) + AMP + diphosphate + H(+). It functions in the pathway aminoacyl-tRNA biosynthesis; selenocysteinyl-tRNA(Sec) biosynthesis; L-seryl-tRNA(Sec) from L-serine and tRNA(Sec): step 1/1. Catalyzes the attachment of serine to tRNA(Ser). Is also able to aminoacylate tRNA(Sec) with serine, to form the misacylated tRNA L-seryl-tRNA(Sec), which will be further converted into selenocysteinyl-tRNA(Sec). In Methanocorpusculum labreanum (strain ATCC 43576 / DSM 4855 / Z), this protein is Serine--tRNA ligase.